The following is a 365-amino-acid chain: Aminomethyltransferase (365 aa).

It belongs to the GcvT family. As to quaternary structure, the glycine cleavage system is composed of four proteins: P, T, L and H.

The catalysed reaction is N(6)-[(R)-S(8)-aminomethyldihydrolipoyl]-L-lysyl-[protein] + (6S)-5,6,7,8-tetrahydrofolate = N(6)-[(R)-dihydrolipoyl]-L-lysyl-[protein] + (6R)-5,10-methylene-5,6,7,8-tetrahydrofolate + NH4(+). Its function is as follows. The glycine cleavage system catalyzes the degradation of glycine. This Aeromonas salmonicida (strain A449) protein is Aminomethyltransferase.